A 436-amino-acid polypeptide reads, in one-letter code: UPF0597 protein YhaM (436 aa).

The protein belongs to the UPF0597 family.

Its function is as follows. Thought to be a D-serine dehydratase, however it does not complement a dsdA (D-serine dehydratase) mutant in strain CFT073, suggesting it may not have that function. This is UPF0597 protein YhaM from Escherichia coli O157:H7.